The chain runs to 532 residues: Glutamate--cysteine ligase (532 aa).

Belongs to the glutamate--cysteine ligase type 1 family. Type 1 subfamily.

It carries out the reaction L-cysteine + L-glutamate + ATP = gamma-L-glutamyl-L-cysteine + ADP + phosphate + H(+). The protein operates within sulfur metabolism; glutathione biosynthesis; glutathione from L-cysteine and L-glutamate: step 1/2. The chain is Glutamate--cysteine ligase from Pseudomonas fluorescens (strain ATCC BAA-477 / NRRL B-23932 / Pf-5).